The sequence spans 537 residues: CWF19-like protein 1 (537 aa).

The interval 297 to 323 (KQGRKRPSTGRDTRPPHAKQPRKPPQP) is disordered.

It belongs to the CWF19 family.

The sequence is that of CWF19-like protein 1 (Cwf19l1) from Mus musculus (Mouse).